Here is a 175-residue protein sequence, read N- to C-terminus: uncharacterized protein (175 aa).

Positions Met1 to Asp17 are enriched in basic and acidic residues. A disordered region spans residues Met1 to Gly21.

This is an uncharacterized protein from Bacillus thuringiensis subsp. kurstaki.